Here is a 198-residue protein sequence, read N- to C-terminus: Remorin (198 aa).

Residues 1 to 11 (MAELEAKKVEI) are compositionally biased toward basic and acidic residues. Positions 1-24 (MAELEAKKVEIVDPAPPAPGPVEA) are disordered. A coiled-coil region spans residues 97-184 (EESEKSKAEN…LKAEELAAKY (88 aa)).

Belongs to the remorin family. The N-terminus is blocked. Post-translationally, phosphorylated.

Its subcellular location is the cell membrane. In terms of biological role, binds to both simple and complex galacturonides. May be involved in cell-to-cell signaling and molecular transport. This Solanum tuberosum (Potato) protein is Remorin.